Reading from the N-terminus, the 356-residue chain is MAPSSSPLRTTSETDEKYANVKWEELGFALTPIDYMYVAKCRQGESFTQGKIVPYGDISISPCSPILNYGQGLFEGLKAYRTEDDRIRIFRPDQNALRMQTGAERLCMTPPTLEQFVEAVKQTVLANKKWVPPPGKGTLYIRPLLLGSGATLGVAPAPEYTFLIYASPVGDYHKVSSGLNLKVDHKYHRAHSGGTGGVKSCTNYSPVVKSLLEAKSAGFSDVLFLDAATGRNIEELTACNIFIVKGNIVSTPPTSGTILPGVTRKSISELAHDIGYQVEERDVSVDELLEAEEVFCTGTAVVVKAVETVTFHDKKVKYRTGEAALSTKLHSMLTNIQMGVVEDKKGWMVDIDPCQG.

An N6-(pyridoxal phosphate)lysine modification is found at K199.

This sequence belongs to the class-IV pyridoxal-phosphate-dependent aminotransferase family. Pyridoxal 5'-phosphate serves as cofactor.

The protein localises to the cytoplasm. It catalyses the reaction L-leucine + 2-oxoglutarate = 4-methyl-2-oxopentanoate + L-glutamate. It carries out the reaction L-isoleucine + 2-oxoglutarate = (S)-3-methyl-2-oxopentanoate + L-glutamate. The enzyme catalyses L-valine + 2-oxoglutarate = 3-methyl-2-oxobutanoate + L-glutamate. It participates in amino-acid biosynthesis; L-isoleucine biosynthesis; L-isoleucine from 2-oxobutanoate: step 4/4. The protein operates within amino-acid biosynthesis; L-leucine biosynthesis; L-leucine from 3-methyl-2-oxobutanoate: step 4/4. It functions in the pathway amino-acid biosynthesis; L-valine biosynthesis; L-valine from pyruvate: step 4/4. In terms of biological role, converts 2-oxo acids to branched-chain amino acids. Acts on leucine, isoleucine and valine. The sequence is that of Branched-chain-amino-acid aminotransferase 6 (BCAT6) from Arabidopsis thaliana (Mouse-ear cress).